The primary structure comprises 62 residues: Endoregulin (62 aa).

The chain crosses the membrane as a helical span at residues 25 to 45; that stretch reads LAVIILFITAVLLLILFAIVF.

In terms of assembly, homooligomer. Can also form heterooligomers with other sarcoplasmic/endoplasmic reticulum calcium ATPase (SERCA) regulators ARLN, PLN, SLN and STRIT1/DWORF. Monomer. Interacts as a monomer with ATP2A2/SERCA2; the interaction results in inhibition of ATP2A2 Ca(2+) affinity.

Its subcellular location is the endoplasmic reticulum membrane. Inhibits the activity of the calcium ATPases ATP2A2/SERCA2 and ATP2A3/SERCA3 by decreasing their apparent affinity for Ca(2+). The sequence is that of Endoregulin from Homo sapiens (Human).